The following is a 347-amino-acid chain: Haptoglobin (347 aa).

An N-terminal signal peptide occupies residues 1-18 (MSALGAVIALLLWGQLFA). One can recognise a Sushi domain in the interval 31-88 (DGCPKPPEIANGYVEHLVRYQCKKYYRLRTEGDGVYTLNNEKQWTNKAVGDKLPECEA). 4 disulfide bridges follow: cysteine 52/cysteine 86, cysteine 90/cysteine 207, cysteine 250/cysteine 281, and cysteine 292/cysteine 322. In terms of domain architecture, Peptidase S1 spans 103-345 (ILGGHLDAKG…IQDWVQKTIA (243 aa)). Residues asparagine 125, asparagine 148, asparagine 152, and asparagine 182 are each glycosylated (N-linked (GlcNAc...) asparagine). An interaction with CD163 region spans residues 259 to 264 (VPEKKT).

Belongs to the peptidase S1 family. Tetramer of two alpha and two beta chains; disulfide-linked. The hemoglobin/haptoglobin complex is composed of a haptoglobin dimer bound to two hemoglobin alpha-beta dimers. Interacts with CD163. Interacts with ERGIC3. Expressed by the liver and secreted in plasma.

It localises to the secreted. As a result of hemolysis, hemoglobin is found to accumulate in the kidney and is secreted in the urine. Haptoglobin captures, and combines with free plasma hemoglobin to allow hepatic recycling of heme iron and to prevent kidney damage. Haptoglobin also acts as an antioxidant, has antibacterial activity and plays a role in modulating many aspects of the acute phase response. Hemoglobin/haptoglobin complexes are rapidly cleared by the macrophage CD163 scavenger receptor expressed on the surface of liver Kupfer cells through an endocytic lysosomal degradation pathway. The polypeptide is Haptoglobin (HP) (Ateles geoffroyi (Black-handed spider monkey)).